Reading from the N-terminus, the 226-residue chain is Uracil-DNA glycosylase (226 aa).

The active-site Proton acceptor is the aspartate 64.

Belongs to the uracil-DNA glycosylase (UDG) superfamily. UNG family.

It localises to the cytoplasm. It carries out the reaction Hydrolyzes single-stranded DNA or mismatched double-stranded DNA and polynucleotides, releasing free uracil.. Functionally, excises uracil residues from the DNA which can arise as a result of misincorporation of dUMP residues by DNA polymerase or due to deamination of cytosine. In Fusobacterium nucleatum subsp. nucleatum (strain ATCC 25586 / DSM 15643 / BCRC 10681 / CIP 101130 / JCM 8532 / KCTC 2640 / LMG 13131 / VPI 4355), this protein is Uracil-DNA glycosylase.